Here is a 468-residue protein sequence, read N- to C-terminus: Aldehyde dehydrogenase family 3 member B1 (468 aa).

Residue Met1 is modified to N-acetylmethionine. Gly188–Gly193 contributes to the NAD(+) binding site. Residues Glu210 and Cys244 contribute to the active site. Cys463 is lipidated: S-palmitoyl cysteine. Cys465 carries the post-translational modification Cysteine methyl ester. The S-geranylgeranyl cysteine moiety is linked to residue Cys465. Residues Thr466–Leu468 constitute a propeptide, removed in mature form.

It belongs to the aldehyde dehydrogenase family. Dually lipidated in the C-terminus; prenylation occurs prior to, and is a prerequisite for palmitoylation. It is also required for activity towards long-chain substrates.

Its subcellular location is the cell membrane. The catalysed reaction is an aldehyde + NAD(+) + H2O = a carboxylate + NADH + 2 H(+). The enzyme catalyses a long-chain fatty aldehyde + NAD(+) + H2O = a long-chain fatty acid + NADH + 2 H(+). It carries out the reaction a medium-chain fatty aldehyde + NAD(+) + H2O = a medium-chain fatty acid + NADH + 2 H(+). It catalyses the reaction octanal + NAD(+) + H2O = octanoate + NADH + 2 H(+). The catalysed reaction is nonanal + NAD(+) + H2O = nonanoate + NADH + 2 H(+). The enzyme catalyses hexadecanoate + NADH + 2 H(+) = hexadecanal + NAD(+) + H2O. It carries out the reaction (2E)-octenal + NAD(+) + H2O = (2E)-octenoate + NADH + 2 H(+). It catalyses the reaction (E)-non-2-enal + NAD(+) + H2O = (E)-non-2-enoate + NADH + 2 H(+). The catalysed reaction is (E)-4-hydroxynon-2-enal + NAD(+) + H2O = (E)-4-hydroxynon-2-enoate + NADH + 2 H(+). The enzyme catalyses (2E)-hexadecenal + NAD(+) + H2O = (E)-hexadec-2-enoate + NADH + 2 H(+). It carries out the reaction benzaldehyde + NAD(+) + H2O = benzoate + NADH + 2 H(+). It catalyses the reaction an aldehyde + NADP(+) + H2O = a carboxylate + NADPH + 2 H(+). The catalysed reaction is a medium-chain fatty aldehyde + NADP(+) + H2O = a medium-chain fatty acid + NADPH + 2 H(+). The enzyme catalyses hexanal + NADP(+) + H2O = hexanoate + NADPH + 2 H(+). It carries out the reaction octanal + NADP(+) + H2O = octanoate + NADPH + 2 H(+). It catalyses the reaction nonanal + NADP(+) + H2O = nonanoate + NADPH + 2 H(+). The catalysed reaction is (2E)-octenal + NADP(+) + H2O = (2E)-octenoate + NADPH + 2 H(+). The enzyme catalyses (E)-non-2-enal + NADP(+) + H2O = (E)-non-2-enoate + NADPH + 2 H(+). It carries out the reaction (E)-4-hydroxynon-2-enal + NADP(+) + H2O = (E)-4-hydroxynon-2-enoate + NADPH + 2 H(+). It catalyses the reaction benzaldehyde + NADP(+) + H2O = benzoate + NADPH + 2 H(+). It participates in alcohol metabolism; ethanol degradation; acetate from ethanol: step 2/2. In terms of biological role, oxidizes medium and long chain saturated and unsaturated fatty aldehydes generated in the plasma membrane into non-toxic fatty acids. May have a protective role against the cytotoxicity induced by lipid peroxidation. Short-chain fatty aldehydes are not good substrates. Can use both NADP(+) and NAD(+) as electron acceptor in vitro, however in vivo preference will depend on their tissue levels. Low activity towards acetaldehyde and 3,4-dihydroxyphenylacetaldehyde. Able to metabolize aromatic aldehydes such as benzaldehyde to their acid form. This chain is Aldehyde dehydrogenase family 3 member B1 (ALDH3B1), found in Bos taurus (Bovine).